The sequence spans 326 residues: Immune-associated nucleotide-binding protein 4 (326 aa).

The AIG1-type G domain occupies 17 to 225 (EPIKNIVLVG…FTDEMHRKIQ (209 aa)). Positions 26 to 33 (GRTGNGKS) are G1. GTP-binding positions include 26–34 (GRTGNGKSA) and Ser47. Residues 53–57 (GVTMK) are G2. The segment at 75–78 (DTPG) is G3. Residues 145-148 (TGGD) are G4. The G5 stretch occupies residues 184-186 (DNR). Asn185 provides a ligand contact to GTP. A coiled-coil region spans residues 217–241 (TDEMHRKIQKEAETLREQQKEVESK).

This sequence belongs to the TRAFAC class TrmE-Era-EngA-EngB-Septin-like GTPase superfamily. AIG1/Toc34/Toc159-like paraseptin GTPase family. IAN subfamily. As to expression, expressed in radicles of the germinating seeds.

The polypeptide is Immune-associated nucleotide-binding protein 4 (Arabidopsis thaliana (Mouse-ear cress)).